A 418-amino-acid chain; its full sequence is Glutamyl-tRNA reductase (418 aa).

Substrate contacts are provided by residues 49-52 (TCNR), serine 109, 114-116 (EPQ), and glutamine 120. Residue cysteine 50 is the Nucleophile of the active site. 189–194 (GAGETI) lines the NADP(+) pocket.

This sequence belongs to the glutamyl-tRNA reductase family. In terms of assembly, homodimer.

The catalysed reaction is (S)-4-amino-5-oxopentanoate + tRNA(Glu) + NADP(+) = L-glutamyl-tRNA(Glu) + NADPH + H(+). It functions in the pathway porphyrin-containing compound metabolism; protoporphyrin-IX biosynthesis; 5-aminolevulinate from L-glutamyl-tRNA(Glu): step 1/2. In terms of biological role, catalyzes the NADPH-dependent reduction of glutamyl-tRNA(Glu) to glutamate 1-semialdehyde (GSA). The sequence is that of Glutamyl-tRNA reductase from Citrobacter koseri (strain ATCC BAA-895 / CDC 4225-83 / SGSC4696).